The following is a 161-amino-acid chain: Allophycocyanin alpha chain (161 aa).

The residue at position 71 (Asn71) is an N4-methylasparagine. Position 81 (Cys81) interacts with (2R,3E)-phycocyanobilin.

Belongs to the phycobiliprotein family. In terms of assembly, heterodimer of an alpha and a beta chain. Contains one covalently linked phycocyanobilin chromophore.

It is found in the plastid. Its subcellular location is the chloroplast thylakoid membrane. In terms of biological role, light-harvesting photosynthetic bile pigment-protein from the phycobiliprotein complex. Allophycocyanin has a maximum absorption at approximately 650 nanometers. The protein is Allophycocyanin alpha chain (apcA) of Porphyra purpurea (Red seaweed).